We begin with the raw amino-acid sequence, 760 residues long: Histone-lysine N-methyltransferase EZH2 (760 aa).

Disordered regions lie at residues 208–231 (KDDAEDHKEQLSSESHNNDGSKKF) and 356–444 (PERA…PENV). Over residues 361–373 (TPSKRSTGRRRGR) the composition is skewed to basic residues. Residues 375 to 388 (PNSNSRPSTPTVNS) are compositionally biased toward polar residues. Residues 389–400 (ETKDTDSDREGG) show a composition bias toward basic and acidic residues. Residues 517 to 619 (CRKIQLKKDG…SKNVSCKNCS (103 aa)) form the CXC domain. In terms of domain architecture, SET spans 626–741 (KHLLLAPSDV…TGEELFFDYR (116 aa)).

It belongs to the class V-like SAM-binding methyltransferase superfamily. Histone-lysine methyltransferase family. EZ subfamily. In terms of assembly, component of the prc2/eed-ezh2 complex.

The protein resides in the nucleus. The enzyme catalyses L-lysyl(27)-[histone H3] + 3 S-adenosyl-L-methionine = N(6),N(6),N(6)-trimethyl-L-lysyl(27)-[histone H3] + 3 S-adenosyl-L-homocysteine + 3 H(+). Polycomb group (PcG) protein. Catalytic subunit of the prc2/eed-ezh2 complex, which methylates 'Lys-9' and 'Lys-27' of histone H3, leading to transcriptional repression of the affected target gene. May regulate the circadian clock via histone methylation at the promoter of the circadian genes. The chain is Histone-lysine N-methyltransferase EZH2 (ezh2) from Danio rerio (Zebrafish).